A 299-amino-acid polypeptide reads, in one-letter code: Protein sprouty homolog 4 (299 aa).

Met1 is modified (N-acetylmethionine). 2 disordered regions span residues 55–79 (NPSL…PTPA) and 92–126 (FSGR…QASP). The span at 92–107 (FSGRPSSVSSSSSTSS) shows a compositional bias: low complexity. Ser125 is modified (phosphoserine). Residues 166–273 (KCKECASPRT…GYDRLRRPGC (108 aa)) form the SPR domain. The interval 181–299 (VCNQECLCSA…AKTSRPDKPF (119 aa)) is required for interaction with TESK1. Required for colocalization with TESK1 at vesicular spots in the cytoplasm and inhibition of TESK1 kinase activity, resulting in inhibition of cell spreading.

This sequence belongs to the sprouty family. Interacts (via C-terminus) with TESK1 (via both C- and N-termini); the interaction inhibits TESK1 kinase activity. Interacts with RAF1. Interacts with CAV1 (via C-terminus).

The protein localises to the cytoplasm. It localises to the cell projection. Its subcellular location is the ruffle membrane. Suppresses the insulin receptor and EGFR-transduced MAPK signaling pathway, but does not inhibit MAPK activation by a constitutively active mutant Ras. Probably impairs the formation of GTP-Ras. Inhibits Ras-independent, but not Ras-dependent, activation of RAF1. Represses integrin-mediated cell spreading via inhibition of TESK1-mediated phosphorylation of cofilin. This Homo sapiens (Human) protein is Protein sprouty homolog 4 (SPRY4).